The following is a 181-amino-acid chain: Ankyrin repeat-containing protein YGL242C (181 aa).

Met-1 carries the N-acetylmethionine modification. ANK repeat units lie at residues 49–78 (LGNT…EIEI) and 85–120 (DGDT…DPRV). A disordered region spans residues 151–181 (IDSTNGSGDNNEDGEMIDDGPSDDDEEDDKK). A compositionally biased stretch (acidic residues) spans 160–181 (NNEDGEMIDDGPSDDDEEDDKK). Ser-172 carries the post-translational modification Phosphoserine.

The protein is Ankyrin repeat-containing protein YGL242C of Saccharomyces cerevisiae (strain ATCC 204508 / S288c) (Baker's yeast).